We begin with the raw amino-acid sequence, 425 residues long: Serine--tRNA ligase (425 aa).

228–230 (TAE) is a binding site for L-serine. 259-261 (RSE) provides a ligand contact to ATP. Residue glutamate 282 participates in L-serine binding. 346 to 349 (EIAS) is an ATP binding site. Position 382 (serine 382) interacts with L-serine.

Belongs to the class-II aminoacyl-tRNA synthetase family. Type-1 seryl-tRNA synthetase subfamily. In terms of assembly, homodimer. The tRNA molecule binds across the dimer.

Its subcellular location is the cytoplasm. It carries out the reaction tRNA(Ser) + L-serine + ATP = L-seryl-tRNA(Ser) + AMP + diphosphate + H(+). The catalysed reaction is tRNA(Sec) + L-serine + ATP = L-seryl-tRNA(Sec) + AMP + diphosphate + H(+). Its pathway is aminoacyl-tRNA biosynthesis; selenocysteinyl-tRNA(Sec) biosynthesis; L-seryl-tRNA(Sec) from L-serine and tRNA(Sec): step 1/1. Catalyzes the attachment of serine to tRNA(Ser). Is also able to aminoacylate tRNA(Sec) with serine, to form the misacylated tRNA L-seryl-tRNA(Sec), which will be further converted into selenocysteinyl-tRNA(Sec). This is Serine--tRNA ligase from Rickettsia felis (strain ATCC VR-1525 / URRWXCal2) (Rickettsia azadi).